Here is a 103-residue protein sequence, read N- to C-terminus: Large ribosomal subunit protein bL21 (103 aa).

The protein belongs to the bacterial ribosomal protein bL21 family. As to quaternary structure, part of the 50S ribosomal subunit. Contacts protein L20.

This protein binds to 23S rRNA in the presence of protein L20. This is Large ribosomal subunit protein bL21 from Chloroflexus aurantiacus (strain ATCC 29364 / DSM 637 / Y-400-fl).